Consider the following 455-residue polypeptide: Retinoic acid receptor beta (455 aa).

The segment at 1–87 is modulating; the sequence is MTTSSRTCPV…PLPPPRVYKP (87 aa). Residues 44-78 form a disordered region; sequence LQSHPPTSGCSTPSPATVETQSTSSEELVPSPPSP. The span at 47-66 shows a compositional bias: polar residues; that stretch reads HPPTSGCSTPSPATVETQST. 2 consecutive NR C4-type zinc fingers follow at residues 88-108 and 124-148; these read CFVC…CEGC and CHRD…LQKC. The segment at residues 88-153 is a DNA-binding region (nuclear receptor); that stretch reads CFVCQDKSSG…RLQKCFEVGM (66 aa). The hinge stretch occupies residues 154 to 182; sequence SKESVRNDRNKKKKEPTKQESTENYEMTA. In terms of domain architecture, NR LBD spans 183–417; that stretch reads ELDDLTEKIR…PLIQEMLENS (235 aa). The disordered stretch occupies residues 416–455; it reads NSEGHEPLTPTSNGNTAEHSPSISPSSVDNSSVSQSPMVQ. Over residues 424–434 the composition is skewed to polar residues; that stretch reads TPTSNGNTAEH. A compositionally biased stretch (low complexity) spans 435-455; it reads SPSISPSSVDNSSVSQSPMVQ.

The protein belongs to the nuclear hormone receptor family. NR1 subfamily. As to quaternary structure, heterodimer; with a RXR molecule. Binds DNA preferentially as a RAR/RXR heterodimer.

The protein resides in the nucleus. Functionally, receptor for retinoic acid. Retinoic acid receptors bind as heterodimers to their target response elements in response to their ligands, all-trans or 9-cis retinoic acid, and regulate gene expression in various biological processes. The RAR/RXR heterodimers bind to the retinoic acid response elements (RARE) composed of tandem 5'-AGGTCA-3' sites known as DR1-DR5. Required for limb and craniofacial development. In Gallus gallus (Chicken), this protein is Retinoic acid receptor beta (RARB).